The sequence spans 360 residues: Phospho-N-acetylmuramoyl-pentapeptide-transferase (360 aa).

A run of 10 helical transmembrane segments spans residues 26-46, 72-92, 94-114, 132-152, 168-188, 199-219, 236-256, 263-283, 288-308, and 338-358; these read AIVS…RMIA, PTMG…LWAY, SNPY…IGFV, WKYF…YLAG, VMPQ…VGTG, GLAI…AWAT, AGEL…FLWF, VFMG…IAVL, FLLV…ILQV, and VIVR…ATLK.

It belongs to the glycosyltransferase 4 family. MraY subfamily. The cofactor is Mg(2+).

The protein resides in the cell inner membrane. It catalyses the reaction UDP-N-acetyl-alpha-D-muramoyl-L-alanyl-gamma-D-glutamyl-meso-2,6-diaminopimeloyl-D-alanyl-D-alanine + di-trans,octa-cis-undecaprenyl phosphate = di-trans,octa-cis-undecaprenyl diphospho-N-acetyl-alpha-D-muramoyl-L-alanyl-D-glutamyl-meso-2,6-diaminopimeloyl-D-alanyl-D-alanine + UMP. It functions in the pathway cell wall biogenesis; peptidoglycan biosynthesis. Functionally, catalyzes the initial step of the lipid cycle reactions in the biosynthesis of the cell wall peptidoglycan: transfers peptidoglycan precursor phospho-MurNAc-pentapeptide from UDP-MurNAc-pentapeptide onto the lipid carrier undecaprenyl phosphate, yielding undecaprenyl-pyrophosphoryl-MurNAc-pentapeptide, known as lipid I. The sequence is that of Phospho-N-acetylmuramoyl-pentapeptide-transferase from Klebsiella pneumoniae subsp. pneumoniae (strain ATCC 700721 / MGH 78578).